The following is a 147-amino-acid chain: Hemoglobin subunit epsilon (147 aa).

The Globin domain occupies His-3–His-147. 2 residues coordinate heme b: His-64 and His-93.

The protein belongs to the globin family. In terms of assembly, heterotetramer of two epsilon chains and two alpha chains. Hemoglobin E (Hbe) contains a alpha-A chains while hemoglobin M (Hbm) contains alpha-D chains.

Its function is as follows. Beta-type chain found in early embryos. This is Hemoglobin subunit epsilon (HBE) from Gallus gallus (Chicken).